A 74-amino-acid chain; its full sequence is MSKECKICGKKPMVGNNVSHAHNVNKRRFNPNLQRVKALFDGQVRRIDVCTSCIKAGKVVKAPTMGQGKVTSAS.

The protein belongs to the bacterial ribosomal protein bL28 family.

This Desulforapulum autotrophicum (strain ATCC 43914 / DSM 3382 / VKM B-1955 / HRM2) (Desulfobacterium autotrophicum) protein is Large ribosomal subunit protein bL28.